The primary structure comprises 252 residues: tRNA pseudouridine synthase A (252 aa).

Aspartate 52 serves as the catalytic Nucleophile. Residue tyrosine 111 coordinates substrate.

This sequence belongs to the tRNA pseudouridine synthase TruA family. As to quaternary structure, homodimer.

It catalyses the reaction uridine(38/39/40) in tRNA = pseudouridine(38/39/40) in tRNA. Formation of pseudouridine at positions 38, 39 and 40 in the anticodon stem and loop of transfer RNAs. This Methylorubrum populi (strain ATCC BAA-705 / NCIMB 13946 / BJ001) (Methylobacterium populi) protein is tRNA pseudouridine synthase A.